The sequence spans 195 residues: Cytochrome c oxidase assembly protein CtaG (195 aa).

Over 1 to 7 (MSGGKPR) the chain is Cytoplasmic. A helical; Signal-anchor for type II membrane protein transmembrane segment spans residues 8–30 (SNTRTVAMLAGVVVLMGALSWAA). Over 31–195 (VPFYSWFCKV…LDAKTEPTVN (165 aa)) the chain is Periplasmic.

Belongs to the COX11/CtaG family.

It localises to the cell inner membrane. Exerts its effect at some terminal stage of cytochrome c oxidase synthesis, probably by being involved in the insertion of the copper B into subunit I. This Paracoccus denitrificans (strain Pd 1222) protein is Cytochrome c oxidase assembly protein CtaG.